A 200-amino-acid chain; its full sequence is Cysteine dioxygenase type 1 (200 aa).

Fe cation-binding residues include His-86, His-88, and His-140. Positions 93 to 157 form a cross-link, 3'-(S-cysteinyl)-tyrosine (Cys-Tyr); that stretch reads CFLKLLQGNL…TEPAVSLHLY (65 aa).

It belongs to the cysteine dioxygenase family. As to quaternary structure, monomer. Fe(2+) serves as cofactor. Ni(2+) is required as a cofactor. The cofactor is Zn(2+). Post-translationally, the thioether cross-link between Cys-93 and Tyr-157 plays a structural role through stabilizing the Fe(2+) ion, and prevents the production of highly damaging free hydroxyl radicals by holding the oxygen radical via hydroxyl hydrogen. Highest expression in liver. Also expressed in kidney, lung, brain and small intestine.

It carries out the reaction L-cysteine + O2 = 3-sulfino-L-alanine + H(+). It functions in the pathway organosulfur biosynthesis; taurine biosynthesis; hypotaurine from L-cysteine: step 1/2. In terms of biological role, catalyzes the oxidation of cysteine to cysteine sulfinic acid with addition of molecular dioxygen. This is Cysteine dioxygenase type 1 (Cdo1) from Mus musculus (Mouse).